The primary structure comprises 212 residues: Large ribosomal subunit protein bL25 (212 aa).

The interval 179–212 (EPEEEELPEDDEAAAEGEDAAAGEEAEAPAESED) is disordered.

Belongs to the bacterial ribosomal protein bL25 family. CTC subfamily. As to quaternary structure, part of the 50S ribosomal subunit; part of the 5S rRNA/L5/L18/L25 subcomplex. Contacts the 5S rRNA. Binds to the 5S rRNA independently of L5 and L18.

Its function is as follows. This is one of the proteins that binds to the 5S RNA in the ribosome where it forms part of the central protuberance. The chain is Large ribosomal subunit protein bL25 from Corynebacterium urealyticum (strain ATCC 43042 / DSM 7109).